Reading from the N-terminus, the 277-residue chain is Adenylate kinase (277 aa).

G53–T58 is a binding site for ATP. The tract at residues A73–V102 is NMP. Residues T74, R79, G100–V102, G129–R132, and Q136 contribute to the AMP site. Residues G170 to D207 form an LID region. ATP is bound by residues R171 and S180–Y181. Residues R204 and R215 each coordinate AMP. Q243 is a binding site for ATP.

Belongs to the adenylate kinase family. AK2 subfamily. In terms of assembly, monomer.

The protein localises to the cytoplasm. Its subcellular location is the cytosol. It localises to the mitochondrion intermembrane space. The catalysed reaction is AMP + ATP = 2 ADP. In terms of biological role, catalyzes the reversible transfer of the terminal phosphate group between ATP and AMP. Plays an important role in cellular energy homeostasis and in adenine nucleotide metabolism. Adenylate kinase activity is critical for regulation of the phosphate utilization and the AMP de novo biosynthesis pathways. In Phaeosphaeria nodorum (strain SN15 / ATCC MYA-4574 / FGSC 10173) (Glume blotch fungus), this protein is Adenylate kinase.